Reading from the N-terminus, the 457-residue chain is Siroheme synthase (457 aa).

Residues 1-204 are precorrin-2 dehydrogenase /sirohydrochlorin ferrochelatase; that stretch reads MDHLPIFCQL…NDQKAITETT (204 aa). NAD(+) is bound by residues 22-23 and 43-44; these read DV and LA. Phosphoserine is present on S128. The tract at residues 216–457 is uroporphyrinogen-III C-methyltransferase; it reads GEVVLVGAGP…RDKLNWFSNH (242 aa). P225 contributes to the S-adenosyl-L-methionine binding site. Catalysis depends on D248, which acts as the Proton acceptor. K270 (proton donor) is an active-site residue. S-adenosyl-L-methionine is bound by residues 301 to 303, I306, 331 to 332, M382, and G411; these read GGD and TA.

The protein in the N-terminal section; belongs to the precorrin-2 dehydrogenase / sirohydrochlorin ferrochelatase family. This sequence in the C-terminal section; belongs to the precorrin methyltransferase family.

The catalysed reaction is uroporphyrinogen III + 2 S-adenosyl-L-methionine = precorrin-2 + 2 S-adenosyl-L-homocysteine + H(+). It catalyses the reaction precorrin-2 + NAD(+) = sirohydrochlorin + NADH + 2 H(+). The enzyme catalyses siroheme + 2 H(+) = sirohydrochlorin + Fe(2+). The protein operates within cofactor biosynthesis; adenosylcobalamin biosynthesis; precorrin-2 from uroporphyrinogen III: step 1/1. It functions in the pathway cofactor biosynthesis; adenosylcobalamin biosynthesis; sirohydrochlorin from precorrin-2: step 1/1. It participates in porphyrin-containing compound metabolism; siroheme biosynthesis; precorrin-2 from uroporphyrinogen III: step 1/1. Its pathway is porphyrin-containing compound metabolism; siroheme biosynthesis; siroheme from sirohydrochlorin: step 1/1. The protein operates within porphyrin-containing compound metabolism; siroheme biosynthesis; sirohydrochlorin from precorrin-2: step 1/1. Functionally, multifunctional enzyme that catalyzes the SAM-dependent methylations of uroporphyrinogen III at position C-2 and C-7 to form precorrin-2 via precorrin-1. Then it catalyzes the NAD-dependent ring dehydrogenation of precorrin-2 to yield sirohydrochlorin. Finally, it catalyzes the ferrochelation of sirohydrochlorin to yield siroheme. The polypeptide is Siroheme synthase (Escherichia coli (strain 55989 / EAEC)).